A 79-amino-acid chain; its full sequence is uncharacterized protein (79 aa).

The protein resides in the mitochondrion. This is an uncharacterized protein from Oenothera berteroana (Bertero's evening primrose).